The chain runs to 385 residues: Lipid-A-disaccharide synthase (385 aa).

This sequence belongs to the LpxB family.

It catalyses the reaction 2-N,3-O-bis[(3R)-3-hydroxytetradecanoyl]-alpha-D-glucosaminyl 1-phosphate + UDP-2-N,3-O-bis[(3R)-3-hydroxytetradecanoyl]-alpha-D-glucosamine = lipid A disaccharide (E. coli) + UDP + H(+). The enzyme catalyses a lipid X + a UDP-2-N,3-O-bis[(3R)-3-hydroxyacyl]-alpha-D-glucosamine = a lipid A disaccharide + UDP + H(+). The protein operates within glycolipid biosynthesis; lipid IV(A) biosynthesis; lipid IV(A) from (3R)-3-hydroxytetradecanoyl-[acyl-carrier-protein] and UDP-N-acetyl-alpha-D-glucosamine: step 5/6. Condensation of UDP-2,3-diacylglucosamine and 2,3-diacylglucosamine-1-phosphate to form lipid A disaccharide, a precursor of lipid A, a phosphorylated glycolipid that anchors the lipopolysaccharide to the outer membrane of the cell. This chain is Lipid-A-disaccharide synthase, found in Wigglesworthia glossinidia brevipalpis.